Here is a 157-residue protein sequence, read N- to C-terminus: Endoribonuclease YbeY (157 aa).

Residues histidine 114, histidine 118, and histidine 124 each contribute to the Zn(2+) site.

The protein belongs to the endoribonuclease YbeY family. Zn(2+) serves as cofactor.

It is found in the cytoplasm. Functionally, single strand-specific metallo-endoribonuclease involved in late-stage 70S ribosome quality control and in maturation of the 3' terminus of the 16S rRNA. The protein is Endoribonuclease YbeY of Serratia proteamaculans (strain 568).